An 85-amino-acid chain; its full sequence is Alpha-toxin BmalphaTx47 (85 aa).

Positions 1–19 are cleaved as a signal peptide; it reads MNYLIVISFALLLMTGVQS. The region spanning 21–83 is the LCN-type CS-alpha/beta domain; that stretch reads RDAYIADSEN…VPIRISGSCR (63 aa). 4 disulfide bridges follow: cysteine 31-cysteine 82, cysteine 35-cysteine 55, cysteine 41-cysteine 65, and cysteine 45-cysteine 67.

It belongs to the long (4 C-C) scorpion toxin superfamily. Sodium channel inhibitor family. Alpha subfamily. As to expression, expressed by the venom gland.

It is found in the secreted. Its function is as follows. Alpha toxins bind voltage-independently at site-3 of sodium channels (Nav) and inhibit the inactivation of the activated channels, thereby blocking neuronal transmission. This toxin expressed with the pET-14b vector has low inhibitory activity on sodium channels (11.33% on rNav1.2/SCN2A, 15.96% on mNav1.4/SCN4A and 5.04% on hNav1.5/SCN5A). When expressed with the pET-28a vector, this toxin has higher inhibitory activities (44.12% on rNav1.2/SCN2A, 25.40% on mNav1.4/SCN4A and 65.34% on hNav1.5/SCN5A). This Olivierus martensii (Manchurian scorpion) protein is Alpha-toxin BmalphaTx47.